Reading from the N-terminus, the 345-residue chain is MNDEMKGKSGKVKVMYVRSDDDSDKRTHNPRTGKGGGRPGKSRADGGRRPARDDKQSQPRDRKWEDSPWRTVSRAPGDETPEKADHGGISGKSFIDPEVLRRQRAEETRVYGENACQALFQSRPEAIVRAWFIQSVTPRFKEALRWMAANRKAYHVVDEAELTKASGTEHHGGVCFLIKKRNGTTVQQWVSQAGAQDCVLALENESNPHNLGGMMRSCAHFGVKGVVVQDAALLESGAAIRTAEGGAEHVQPITGDNIVNVLDDFRQAGYTVVTTSSEQGKPLFKTSLPAKMVLVLGQEYEGLPDAARDPNDLRVKIDGTGNVAGLNISVATGVLLGEWWRQNKA.

The tract at residues 1-98 (MNDEMKGKSG…ISGKSFIDPE (98 aa)) is disordered. Basic and acidic residues-rich tracts occupy residues 18 to 27 (RSDDDSDKRT), 42 to 68 (SRAD…EDSP), and 76 to 86 (PGDETPEKADH).

It belongs to the class IV-like SAM-binding methyltransferase superfamily. RNA methyltransferase TrmH family.

This is an uncharacterized protein from Escherichia coli O157:H7.